The primary structure comprises 639 residues: Tubulin--tyrosine ligase-like protein 12 (639 aa).

Residues 295–639 (PQGHVFRVHC…TDNCHVTRII (345 aa)) form the TTL domain. ATP is bound by residues 445 to 448 (SKYI), Lys-463, and Asp-465.

The protein belongs to the tubulin--tyrosine ligase family. As to quaternary structure, interacts with MAVS; the interaction prevents MAVS binding to TBK1 and IKBKE. Interacts (via N-terminus) with TBK1 (via protein kinase domain). Interacts (via TTL domain) with IKBKE (via protein kinase domain). Interacts with tubulin alpha. Interacts with histone H3 and histone H4 (when trimethylated at 'Lys-20' (H4K20me3)). Interacts with CBX3. Widely expressed with highest levels in brain, kidney, liver, lung, muscle and testis.

The protein resides in the cytoplasm. It is found in the midbody. It localises to the cytoskeleton. The protein localises to the microtubule organizing center. Its subcellular location is the centrosome. The protein resides in the spindle. It is found in the nucleus. In terms of biological role, negatively regulates post-translational modifications of tubulin, including detyrosination of the C-terminus and polyglutamylation of glutamate residues. Also, indirectly promotes histone H4 trimethylation at 'Lys-20' (H4K20me3). Probably by controlling tubulin and/or histone H4 post-translational modifications, plays a role in mitosis and in maintaining chromosome number stability. During RNA virus-mediated infection, acts as a negative regulator of the RIG-I pathway by preventing MAVS binding to TBK1 and IKBKE. The protein is Tubulin--tyrosine ligase-like protein 12 of Mus musculus (Mouse).